The chain runs to 248 residues: MKTLILLIQFFTRIPLPVQINMDEINLKKGSALLPFVGVIIGAWNWLIFTLVALLMPLPVAIIAGLFAEIIITGGFHVDALADTADGLFSSRKRERMLEIMKDSRVGANGVIAICFYFLFYGSLFLSVPDTQQIGWLFFVLPIVAKGVTMLLFAKMTYAGSKEGLGSIFLGVPWWPVVIAQVIVLVALGAFFSYIGVIAYAGVILFTIIYRAFVYKRIGGMNGDTLGAGGQMGQLICLFCLVLLWGLI.

7 consecutive transmembrane segments (helical) span residues 24–44, 70–90, 106–126, 134–154, 168–188, 189–209, and 228–248; these read EINL…IGAW, IIIT…GLFS, VGAN…SLFL, IGWL…LLFA, IFLG…LVAL, GAFF…FTII, and AGGQ…WGLI.

The protein belongs to the CobS family. The cofactor is Mg(2+).

It is found in the cell membrane. The catalysed reaction is alpha-ribazole + adenosylcob(III)inamide-GDP = adenosylcob(III)alamin + GMP + H(+). It carries out the reaction alpha-ribazole 5'-phosphate + adenosylcob(III)inamide-GDP = adenosylcob(III)alamin 5'-phosphate + GMP + H(+). Its pathway is cofactor biosynthesis; adenosylcobalamin biosynthesis; adenosylcobalamin from cob(II)yrinate a,c-diamide: step 7/7. Its function is as follows. Joins adenosylcobinamide-GDP and alpha-ribazole to generate adenosylcobalamin (Ado-cobalamin). Also synthesizes adenosylcobalamin 5'-phosphate from adenosylcobinamide-GDP and alpha-ribazole 5'-phosphate. The polypeptide is Adenosylcobinamide-GDP ribazoletransferase (Listeria monocytogenes serotype 4b (strain F2365)).